A 320-amino-acid chain; its full sequence is Lipoyl synthase (320 aa).

[4Fe-4S] cluster is bound by residues Cys-67, Cys-72, Cys-78, Cys-93, Cys-97, Cys-100, and Ser-307. The Radical SAM core domain maps to 79–296 (FNHGTATFMI…RDKANEMGFE (218 aa)).

Belongs to the radical SAM superfamily. Lipoyl synthase family. [4Fe-4S] cluster serves as cofactor.

The protein resides in the cytoplasm. The enzyme catalyses [[Fe-S] cluster scaffold protein carrying a second [4Fe-4S](2+) cluster] + N(6)-octanoyl-L-lysyl-[protein] + 2 oxidized [2Fe-2S]-[ferredoxin] + 2 S-adenosyl-L-methionine + 4 H(+) = [[Fe-S] cluster scaffold protein] + N(6)-[(R)-dihydrolipoyl]-L-lysyl-[protein] + 4 Fe(3+) + 2 hydrogen sulfide + 2 5'-deoxyadenosine + 2 L-methionine + 2 reduced [2Fe-2S]-[ferredoxin]. It participates in protein modification; protein lipoylation via endogenous pathway; protein N(6)-(lipoyl)lysine from octanoyl-[acyl-carrier-protein]: step 2/2. Catalyzes the radical-mediated insertion of two sulfur atoms into the C-6 and C-8 positions of the octanoyl moiety bound to the lipoyl domains of lipoate-dependent enzymes, thereby converting the octanoylated domains into lipoylated derivatives. This is Lipoyl synthase from Haemophilus influenzae (strain ATCC 51907 / DSM 11121 / KW20 / Rd).